We begin with the raw amino-acid sequence, 346 residues long: Peripherin-2 (346 aa).

The Cytoplasmic segment spans residues 1 to 24 (MALLKVKFDQKKRVKLAQGLWLMN). A helical transmembrane segment spans residues 25 to 43 (WLSVLAGIVIFSLGLFLKI). Topologically, residues 44-61 (ELRKRSDVMNNSESHFVP) are lumenal. N-linked (GlcNAc...) asparagine glycosylation is present at Asn-53. A helical transmembrane segment spans residues 62–80 (NSLIVMGVLSCVFNSLAGK). Residues 81-99 (ICYDALDPAKYAKWKPWLK) lie on the Cytoplasmic side of the membrane. A helical membrane pass occupies residues 100–123 (PYLAVCVLFNIALFLVTLCCFLMR). Over 124 to 264 (GSLESTLAHG…LSYYSSLMNS (141 aa)) the chain is Lumenal. N-linked (GlcNAc...) asparagine glycosylation occurs at Asn-229. The helical transmembrane segment at 265-290 (MGAVTLLVWLFEVTITIGLRYLHTAL) threads the bilayer. Residues 291–346 (EGVSNPEDPECESEGWLLEKSVSETWKAFLESLKKLGKSNQVEAEGADAGQAPEAG) are Cytoplasmic-facing. Positions 341–346 (QAPEAG) are interaction with MREG.

This sequence belongs to the PRPH2/ROM1 family. As to quaternary structure, homodimer; disulfide-linked. Forms a homotetramer. Forms a heterotetramer with ROM1. Homotetramer and heterotetramer core complexes go on to form higher order complexes by formation of intermolecular disulfide bonds. Interacts with MREG. Interacts with STX3. Interacts with SNAP25. In terms of tissue distribution, retina (photoreceptor). In rim region of ROS (rod outer segment) disks.

The protein resides in the membrane. It localises to the cell projection. The protein localises to the cilium. Its subcellular location is the photoreceptor outer segment. It is found in the photoreceptor inner segment. Functionally, essential for retina photoreceptor outer segment disk morphogenesis, may also play a role with ROM1 in the maintenance of outer segment disk structure. Required for the maintenance of retinal outer nuclear layer thickness. Required for the correct development and organization of the photoreceptor inner segment. The protein is Peripherin-2 (PRPH2) of Canis lupus familiaris (Dog).